A 355-amino-acid polypeptide reads, in one-letter code: C-C chemokine receptor type 1 (355 aa).

The Extracellular portion of the chain corresponds to 1–34; it reads MEISDFTEAYPTTTEFDYGDSTPCQKTAVRAFGA. Residues 35–60 traverse the membrane as a helical segment; it reads GLLPPLYSLVFIIGVVGNVLVILVLM. Residues 61–64 are Cytoplasmic-facing; the sequence is QHRR. The chain crosses the membrane as a helical span at residues 65–91; it reads LQSMTSIYLFNLAVSDLVFLFTLPFWI. Topologically, residues 92–107 are extracellular; that stretch reads DYKLKDDWIFGDAMCK. Cysteines 106 and 183 form a disulfide. A helical transmembrane segment spans residues 108–129; sequence LLSGFYYLGLYSEIFFIILLTI. At 130-146 the chain is on the cytoplasmic side; the sequence is DRYLAIVHAVFALRART. A helical membrane pass occupies residues 147–171; the sequence is VTFGIITSIITWALAILASMPALYF. Topologically, residues 172–197 are extracellular; the sequence is FKAQWEFTHRTCSPHFPYKSLKQWKR. Residues 198-223 form a helical membrane-spanning segment; that stretch reads FQALKLNLLGLILPLLVMIICYAGII. At 224–239 the chain is on the cytoplasmic side; that stretch reads RILLRRPSEKKVKAVR. A helical transmembrane segment spans residues 240 to 264; that stretch reads LIFAITLLFFLLWTPYNLSVFVSAF. Residues 265-281 lie on the Extracellular side of the membrane; it reads QDVLFTNQCEQSKQLDL. Residues 282-305 form a helical membrane-spanning segment; that stretch reads AMQVTEVIAYTHCCVNPIIYVFVG. At 306–355 the chain is on the cytoplasmic side; it reads ERFWKYLRQLFQRHVAIPLAKWLPFLSVDQLERTSSISPSTGEHELSAGF.

This sequence belongs to the G-protein coupled receptor 1 family. Interacts with CREB3. Interacts with CCL3. Interacts with CCL15. Interacts with CCL23. Interacts with GNAI1. Interacts with PF4/CXCL4. As to expression, detected in the heart, spleen, lung, peritoneal exudate cells and leukocytes.

The protein localises to the cell membrane. Functionally, chemokine receptor that plays a crucial role in regulating immune cell migration, inflammation, and immune responses. Contributes to the inflammatory response by recruiting immune cells, such as monocytes, macrophages, T-cells, and dendritic cells, to sites of inflammation for the clearance of pathogens and the resolution of tissue damage. When activated by its ligands including CCL3, CCL5-9, CCL13-16 and CCL23, triggers a signaling cascade within immune cells, leading to their migration towards the source of the chemokine. For example, mediates neutrophil migration after activation by CCL3 leading to the sequential release of TNF-alpha and leukotriene B4. Also mediates monocyte migration upon CXCL4 binding. Activation by CCL5 results in neuroinflammation through the ERK1/2 signaling pathway. This is C-C chemokine receptor type 1 (Ccr1) from Mus musculus (Mouse).